A 642-amino-acid polypeptide reads, in one-letter code: Transmembrane 9 superfamily member 4 (642 aa).

The N-terminal stretch at 1–23 (MATAMDWLPWSLLLFSLMCETSA) is a signal peptide. Residues 24–281 (FYVPGVAPIN…TMSDVQIHWF (258 aa)) lie on the Extracellular side of the membrane. The helical transmembrane segment at 282–302 (SIINSVVVVFFLSGILSMIII) threads the bilayer. Over 303 to 346 (RTLRKDIANYNKEDDIEDTMEESGWKLVHGDVFRPPQYPMILSS) the chain is Cytoplasmic. A Phosphotyrosine modification is found at Tyr-312. Residues 347 to 367 (LLGSGIQLFCMILIVIFVAML) traverse the membrane as a helical segment. Residues 368–376 (GMLSPSSRG) are Extracellular-facing. The helical transmembrane segment at 377–397 (ALMTTACFLFMFMGVFGGFSA) threads the bilayer. Residues 398-416 (GRLYRTLKGHRWKKGAFCT) lie on the Cytoplasmic side of the membrane. Residues 417–437 (ATLYPGVVFGICFVLNCFIWG) traverse the membrane as a helical segment. Residues 438–449 (KHSSGAVPFPTM) lie on the Extracellular side of the membrane. Residues 450 to 470 (VALLCMWFGISLPLVYLGYYF) traverse the membrane as a helical segment. Over 471-501 (GFRKQPYDNPVRTNQIPRQIPEQRWYMNRFV) the chain is Cytoplasmic. The chain crosses the membrane as a helical span at residues 502–522 (GILMAGILPFGAMFIELFFIF). Over 523–535 (SAIWENQFYYLFG) the chain is Extracellular. A helical membrane pass occupies residues 536–556 (FLFLVFIILVVSCSQISIVMV). The Cytoplasmic segment spans residues 557–570 (YFQLCAEDYRWWWR). The chain crosses the membrane as a helical span at residues 571–591 (NFLVSGGSAFYVLVYAIFYFV). Topologically, residues 592-598 (NKLDIVE) are extracellular. Residues 599-619 (FIPSLLYFGYTALMVLSFWLL) traverse the membrane as a helical segment. At 620–642 (TGTIGFYAAYMFVRKIYAAVKID) the chain is on the cytoplasmic side.

Belongs to the nonaspanin (TM9SF) (TC 9.A.2) family. In terms of assembly, interacts with ATP6V1H in colon cancer cells. Highly expressed in metastatic melanoma cells whereas it is undetectable in primary melanoma cells, healthy skin tissues and peripheral blood lymphocytes. Expressed in CD34(+) hematopoietic progenitor cells and during monocyte and granulocyte differentiation. Overexpressed in acute myeloid leukemia, in particular in those displaying granulocytic differentiation (at protein level).

Its subcellular location is the membrane. It localises to the golgi apparatus. The protein localises to the early endosome. Functionally, associates with proteins harboring glycine-rich transmembrane domains and ensures their efficient localization to the cell surface. Regulates the assembly and activity of V-ATPase in colon cancer cells via its interaction with V-type proton ATPase subunit H (ATP6V1H) and contributes to V-ATPase-mediated pH alterations in cancer cells which play an important role in drug resistance and invasiveness of colon cancer cells. Plays an important role in an atypical phagocytic activity of metastatic melanoma cells called cannibalism and is involved in the pH regulation of the intracellular vesicles in tumor cells. This chain is Transmembrane 9 superfamily member 4 (TM9SF4), found in Homo sapiens (Human).